The following is a 325-amino-acid chain: GMP reductase (325 aa).

The active-site Thioimidate intermediate is cysteine 174. 203–226 (MIADGGIRTHGDIAKSIRFGASMV) provides a ligand contact to NADP(+).

This sequence belongs to the IMPDH/GMPR family. GuaC type 2 subfamily.

The enzyme catalyses IMP + NH4(+) + NADP(+) = GMP + NADPH + 2 H(+). Its function is as follows. Catalyzes the irreversible NADPH-dependent deamination of GMP to IMP. It functions in the conversion of nucleobase, nucleoside and nucleotide derivatives of G to A nucleotides, and in maintaining the intracellular balance of A and G nucleotides. The chain is GMP reductase from Staphylococcus carnosus (strain TM300).